A 147-amino-acid chain; its full sequence is Myoglobin (147 aa).

One can recognise a Globin domain in the interval 2–141 (ADFDMVLKCW…IIADMEADYK (140 aa)). Residue His60 coordinates nitrite. His60 contributes to the O2 binding site. His89 contributes to the heme b binding site.

Belongs to the globin family. As to quaternary structure, monomeric.

The protein localises to the cytoplasm. Its subcellular location is the sarcoplasm. It catalyses the reaction Fe(III)-heme b-[protein] + nitric oxide + H2O = Fe(II)-heme b-[protein] + nitrite + 2 H(+). The catalysed reaction is H2O2 + AH2 = A + 2 H2O. Functionally, monomeric heme protein which primary function is to store oxygen and facilitate its diffusion within muscle tissues. Reversibly binds oxygen through a pentacoordinated heme iron and enables its timely and efficient release as needed during periods of heightened demand. Depending on the oxidative conditions of tissues and cells, and in addition to its ability to bind oxygen, it also has a nitrite reductase activity whereby it regulates the production of bioactive nitric oxide. Under stress conditions, like hypoxia and anoxia, it also protects cells against reactive oxygen species thanks to its pseudoperoxidase activity. This is Myoglobin (mb) from Gobionotothen gibberifrons (Humped rockcod).